Reading from the N-terminus, the 175-residue chain is MARLQLAGSRRLVPLPRRAPRLAPLLLPLLLALPDGARADCPCKVPALCRPMTHRPDFEVFVFNVGHKTWKYYDWSQITTVVLFLKYDPELMCHAHAKGARVVLKGDVPVKDIINATFRASWIAQQVKLAKTQYMDGINLDIEQDVAHSSPEYYALTALVKETTDSFHHEIKGSQ.

A signal peptide spans 1 to 38 (MARLQLAGSRRLVPLPRRAPRLAPLLLPLLLALPDGAR). The GH18 domain occupies 39–175 (ADCPCKVPAL…SFHHEIKGSQ (137 aa)). Asparagine 115 carries an N-linked (GlcNAc...) asparagine glycan. Glutamate 143 (proton donor) is an active-site residue.

The protein belongs to the glycosyl hydrolase 18 family.

The protein localises to the lysosome. Functionally, involved in the degradation of asparagine-linked glycoproteins. Hydrolyze of N-acetyl-beta-D-glucosamine (1-4)N-acetylglucosamine chitobiose core from the reducing end of the bond, it requires prior cleavage by glycosylasparaginase. The chain is Di-N-acetylchitobiase (CTBS) from Bos taurus (Bovine).